The primary structure comprises 461 residues: Cytochrome c biogenesis protein CcsB (461 aa).

Helical transmembrane passes span 32-52, 91-111, and 178-198; these read LRLA…GTVI, TWWF…CTFT, and IGPI…IWGA.

Belongs to the Ccs1/CcsB family. In terms of assembly, may interact with CcsA.

It localises to the cellular thylakoid membrane. Its function is as follows. Required during biogenesis of c-type cytochromes (cytochrome c6 and cytochrome f) at the step of heme attachment. This is Cytochrome c biogenesis protein CcsB from Nostoc sp. (strain PCC 7120 / SAG 25.82 / UTEX 2576).